Here is a 463-residue protein sequence, read N- to C-terminus: Mitochondrial dynamics protein MID51 (463 aa).

Residues 1–23 (MAGAGERKGKKDDNGIGTAIDFV) are Mitochondrial intermembrane-facing. The chain crosses the membrane as a helical span at residues 24 to 46 (LSNARLVLGVGGAAMLGIATLAV). Over 47–463 (KRMYDRAISA…LSEPEVLLQT (417 aa)) the chain is Cytoplasmic. The interval 49 to 195 (MYDRAISAPT…LSGSLYDDLQ (147 aa)) is dimerization. Phosphoserine occurs at positions 55, 59, 79, and 94. The disordered stretch occupies residues 57–77 (PTSPTRLSHSGKRSWEEPNWM). The segment at 160 to 169 (AAVDICAELR) is important for interaction with DNM1L. 3 residues coordinate ADP: Ser-187, Ser-189, and His-201. The tract at residues 234-243 (RRENPEYFPR) is important for interaction with DNM1L. ADP contacts are provided by Ser-340, Arg-342, and Lys-368.

It belongs to the MID49/MID51 family. As to quaternary structure, homodimer. Interacts with DNM1L.

It is found in the mitochondrion outer membrane. Functionally, mitochondrial outer membrane protein which regulates mitochondrial fission/fusion dynamics. Promotes the recruitment and association of the fission mediator dynamin-related protein 1 (DNM1L) to the mitochondrial surface independently of the mitochondrial fission FIS1 and MFF proteins. Regulates DNM1L GTPase activity and DNM1L oligomerization. Binds ADP and can also bind GDP, although with lower affinity. Does not bind CDP, UDP, ATP, AMP or GTP. Inhibits DNM1L GTPase activity in the absence of bound ADP. Requires ADP to stimulate DNM1L GTPase activity and the assembly of DNM1L into long, oligomeric tubules with a spiral pattern, as opposed to the ring-like DNM1L oligomers observed in the absence of bound ADP. Does not require ADP for its function in recruiting DNM1L. This is Mitochondrial dynamics protein MID51 (Mief1) from Rattus norvegicus (Rat).